The primary structure comprises 570 residues: A-type ATP synthase subunit A (570 aa).

223–230 (GPFGSGKT) is an ATP binding site.

Belongs to the ATPase alpha/beta chains family. As to quaternary structure, has multiple subunits with at least A(3), B(3), C, D, E, F, H, I and proteolipid K(x).

It is found in the cell membrane. The enzyme catalyses ATP + H2O + 4 H(+)(in) = ADP + phosphate + 5 H(+)(out). Component of the A-type ATP synthase that produces ATP from ADP in the presence of a proton gradient across the membrane. The A chain is the catalytic subunit. The chain is A-type ATP synthase subunit A from Nanoarchaeum equitans (strain Kin4-M).